The primary structure comprises 191 residues: MFAAENGLKGDPRLEAISAAIRVVPNFPKKGIMFQDITTLLLDHKAFKHTIDIFVDRYKDMQISVVAGVEARGFLFGPSIALAIGAKFIPLRKPGKLPGKVISESYELEYGHDRLEMHVGAVEPRERVIIIDDLVATGGTLSAAMSLLESQGAEVVECACVIGLPEVKGQHKLKGKPLYVLVEPSGLDEFC.

This sequence belongs to the purine/pyrimidine phosphoribosyltransferase family. Homodimer.

It localises to the cytoplasm. It catalyses the reaction AMP + diphosphate = 5-phospho-alpha-D-ribose 1-diphosphate + adenine. It participates in purine metabolism; AMP biosynthesis via salvage pathway; AMP from adenine: step 1/1. Functionally, catalyzes a salvage reaction resulting in the formation of AMP, that is energically less costly than de novo synthesis. May contribute to the recycling of adenine into adenylate nucleotides and the inactivation of cytokinins by phosphoribosylation. Possesses low activity toward adenine, but can efficiently convert cytokinins from free bases (active form) to the corresponding nucleotides (inactive form). This Arabidopsis thaliana (Mouse-ear cress) protein is Adenine phosphoribosyltransferase 5 (APT5).